Here is a 447-residue protein sequence, read N- to C-terminus: Naphthalene 1,2-dioxygenase system, large oxygenase component (447 aa).

The 99-residue stretch at 37 to 135 (WLFLTHDSLI…IKKKCLGLKE (99 aa)) folds into the Rieske domain. [2Fe-2S] cluster contacts are provided by Cys79, His81, Cys99, and His102. The Fe cation site is built by His206, His211, and Asp360.

The protein belongs to the bacterial ring-hydroxylating dioxygenase alpha subunit family. The naphthalene dioxygenase (NDO) multicomponent enzyme system is composed of an electron transfer component and a dioxygenase component (iron sulfur protein (ISP)). The electron transfer component is composed of a ferredoxin reductase (NagAa) and a ferredoxin (NagAb), and the dioxygenase component is formed by a large alpha subunit (NagAc) and a small beta subunit (NagAd). [2Fe-2S] cluster serves as cofactor. Fe(2+) is required as a cofactor.

It carries out the reaction naphthalene + NADH + O2 + H(+) = (1R,2S)-1,2-dihydronaphthalene-1,2-diol + NAD(+). It participates in aromatic compound metabolism; naphthalene degradation. Component of the naphthalene dioxygenase (NDO) multicomponent enzyme system which catalyzes the incorporation of both atoms of molecular oxygen into naphthalene to form cis-(1R,2S)-dihydroxy-1,2-dihydronaphthalene. The alpha subunit has a catalytic role in the holoenzyme. Also able to use styrene as substrate. This Ralstonia sp protein is Naphthalene 1,2-dioxygenase system, large oxygenase component.